The sequence spans 239 residues: MSREEEEKLLFPSFAFPAECFPEAATSGGEQKKARQRRRRKVKPEAAAALAGESGGDEQAKKRRLSDEQARFLEMSFKKERKLETPRKVQLAAELGLDAKQVAVWFQNRRARHKSKLMEEEFAKLRSAHDAVVLQNCHLETELLKLKERLADVEEEKAKLAAVAAATTGGGGGGGGGSSSPTSSSFSTVTYHPVLAGQFGVEAAAEEADLTYMSEYAYNSYMLELAAAGYCGGVYDQFS.

Residues 22-65 (PEAATSGGEQKKARQRRRRKVKPEAAAALAGESGGDEQAKKRRL) are disordered. A DNA-binding region (homeobox) is located at residues 58-117 (EQAKKRRLSDEQARFLEMSFKKERKLETPRKVQLAAELGLDAKQVAVWFQNRRARHKSKL). A coiled-coil region spans residues 107–168 (QNRRARHKSK…KLAAVAAATT (62 aa)).

The protein belongs to the HD-ZIP homeobox family. Class I subfamily. Expressed in seedlings, roots, stems, leaf sheaths and panicles.

The protein resides in the nucleus. Its function is as follows. Probable transcription factor. The polypeptide is Homeobox-leucine zipper protein HOX12 (HOX12) (Oryza sativa subsp. indica (Rice)).